The following is a 619-amino-acid chain: MINHNKTPNILAKVFKRTCGLVSTGAALAILSQAASAACTYTIDSEWSTGFTANITLKNDTGAAINNWNVNWQYSSNRMTSGWNANFSGTNPYNATNMSWNGSIAPGQSISFGLQGEKNGSTAERPTVTGAACNSATTSSVASSSSTPTTSSSSASSVASALLLQEAQAGFCRVDGTIDNNHTGFTGSGFANTNNAQGAAVVWAIDATSSGRRTLTIRYANGGTANRNGSLVINGGSNGNYTVSLPTTGAWTTWQTATIDVDLVQGNNIVQLSATTAEGLPNIDSLSVVGGTVRAGNCGSVSSSSSVQSSSSSSSTPSQTCELKAPLRWTSTGPLISPKNPGWISIKDPSIVKYNDTYHVYATYYDTAYRSMYTSFTDWNTAQQAPHISMNGSRVGNTVAPQVFYFRPHNKWYLITQWAGAYATTDDIRNPNWSAKQKLLQGEPNGALDFWVICNDTHCYLYFSRDDGVLYVSKTTLANFPNFSGYSIVMEDHRGNGNSYLFEAANVYKLDGQNRYLLMVEAYISGPRFFRSWTATSLDGPWTPLADTEANPFAGNNNVEWSTGKWADGISHGELIRSGHDEKMTVDPCNLEFLYQGASGPGSTYNTIPYKLGLLRLKK.

Positions 1–37 are cleaved as a signal peptide; that stretch reads MINHNKTPNILAKVFKRTCGLVSTGAALAILSQAASA. The region spanning 38-136 is the CBM2 domain; sequence ACTYTIDSEW…TVTGAACNSA (99 aa). Cysteine 39 and cysteine 133 are disulfide-bonded. The region spanning 163 to 289 is the CBM6 domain; sequence LLQEAQAGFC…LPNIDSLSVV (127 aa). The segment at 300-319 is disordered; it reads SVSSSSSVQSSSSSSSTPSQ.

It belongs to the glycosyl hydrolase 62 family.

It localises to the secreted. The enzyme catalyses Hydrolysis of terminal non-reducing alpha-L-arabinofuranoside residues in alpha-L-arabinosides.. It functions in the pathway glycan metabolism; hemicellulose degradation. Its function is as follows. Xylanase C contributes to hydrolyze hemicellulose, the major component of plant cell-walls. The chain is Alpha-L-arabinofuranosidase C (xynC) from Cellvibrio japonicus (strain Ueda107) (Pseudomonas fluorescens subsp. cellulosa).